The following is a 366-amino-acid chain: Flagellar P-ring protein (366 aa).

A signal peptide spans Met1–Ala24.

It belongs to the FlgI family. The basal body constitutes a major portion of the flagellar organelle and consists of four rings (L,P,S, and M) mounted on a central rod.

The protein resides in the periplasm. It localises to the bacterial flagellum basal body. Functionally, assembles around the rod to form the L-ring and probably protects the motor/basal body from shearing forces during rotation. The polypeptide is Flagellar P-ring protein (Nitratidesulfovibrio vulgaris (strain ATCC 29579 / DSM 644 / CCUG 34227 / NCIMB 8303 / VKM B-1760 / Hildenborough) (Desulfovibrio vulgaris)).